The sequence spans 299 residues: Cysteine synthase B (299 aa).

Lys45 is modified (N6-(pyridoxal phosphate)lysine). Pyridoxal 5'-phosphate is bound by residues Asn75, Gly178 to Thr182, and Ser259.

Belongs to the cysteine synthase/cystathionine beta-synthase family. It depends on pyridoxal 5'-phosphate as a cofactor.

The enzyme catalyses O-acetyl-L-serine + hydrogen sulfide = L-cysteine + acetate. Its pathway is amino-acid biosynthesis; L-cysteine biosynthesis; L-cysteine from L-serine: step 2/2. In Pseudomonas aeruginosa (strain ATCC 15692 / DSM 22644 / CIP 104116 / JCM 14847 / LMG 12228 / 1C / PRS 101 / PAO1), this protein is Cysteine synthase B (cysM).